The following is a 237-amino-acid chain: V-type proton ATPase subunit E (237 aa).

This sequence belongs to the V-ATPase E subunit family. As to quaternary structure, V-ATPase is a heteromultimeric enzyme composed of a peripheral catalytic V1 complex (components A to H) attached to an integral membrane V0 proton pore complex (components: a, c, c', c'' and d).

Subunit of the peripheral V1 complex of vacuolar ATPase essential for assembly or catalytic function. V-ATPase is responsible for acidifying a variety of intracellular compartments in eukaryotic cells. In Gossypium hirsutum (Upland cotton), this protein is V-type proton ATPase subunit E (VATE).